The following is a 288-amino-acid chain: Galactose/N-acetyl-D-galactosamine lectin light subunit 1 (288 aa).

The N-terminal stretch at methionine 1–threonine 15 is a signal peptide. N-linked (GlcNAc...) asparagine glycosylation is found at asparagine 205 and asparagine 261.

As to quaternary structure, heterodimer composed of a 170 kDa heavy subunit (hgl) and a 31/35 kDa light subunit (lgl); disulfide-linked.

It is found in the cell membrane. Light subunit of a heterodimeric lectin; the heavy subunit binds galactose and N-acetyl-D-galactosamine of host glycoproteins and thus mediates adhesion to host cells. This Entamoeba histolytica (strain ATCC 30459 / HM-1:IMSS / ABRM) protein is Galactose/N-acetyl-D-galactosamine lectin light subunit 1.